The sequence spans 91 residues: Conotoxin VnMKLT1-021 (91 aa).

An N-terminal signal peptide occupies residues 1 to 22 (MKLTCVMIVAVLFLTAWTFVTA). A propeptide spanning residues 23 to 57 (DDPRDGPDTAVGWRKLFSEARDEMKNREASKLNER) is cleaved from the precursor. Disulfide bonds link C59–C78, C66–C82, and C77–C86.

This sequence belongs to the conotoxin O1 superfamily. Expressed by the venom duct.

The protein resides in the secreted. The chain is Conotoxin VnMKLT1-021 from Conus ventricosus (Mediterranean cone).